The following is a 406-amino-acid chain: UPF0761 membrane protein NMB0524 (406 aa).

Helical transmembrane passes span 43-63, 100-120, 139-159, 176-196, 210-230, and 248-268; these read LLAL…FPVF, LTAI…RTID, FLVY…GISF, WSGA…LWGL, AFVG…LFTW, and VPFF…GAVL.

This sequence belongs to the UPF0761 family.

Its subcellular location is the cell inner membrane. This is UPF0761 membrane protein NMB0524 from Neisseria meningitidis serogroup B (strain ATCC BAA-335 / MC58).